Consider the following 81-residue polypeptide: Translational regulator CsrA (81 aa).

Residues 59 to 71 (SQMQHLEQGNFPT) show a composition bias toward polar residues. The tract at residues 59–81 (SQMQHLEQGNFPTSFDDDDFFNR) is disordered.

It belongs to the CsrA/RsmA family. As to quaternary structure, homodimer; the beta-strands of each monomer intercalate to form a hydrophobic core, while the alpha-helices form wings that extend away from the core.

The protein resides in the cytoplasm. In terms of biological role, a key translational regulator that binds mRNA to regulate translation initiation and/or mRNA stability. Mediates global changes in gene expression, shifting from rapid growth to stress survival by linking envelope stress, the stringent response and the catabolite repression systems. Usually binds in the 5'-UTR; binding at or near the Shine-Dalgarno sequence prevents ribosome-binding, repressing translation, binding elsewhere in the 5'-UTR can activate translation and/or stabilize the mRNA. Its function is antagonized by small RNA(s). The sequence is that of Translational regulator CsrA from Psychrobacter sp. (strain PRwf-1).